A 130-amino-acid chain; its full sequence is Methylglyoxal synthase (130 aa).

An MGS-like domain is found at 1 to 130 (MSKPRIALIA…DLARNMQDVC (130 aa)). Substrate contacts are provided by residues His11, Lys15, 37 to 40 (TGTT), and 57 to 58 (SG). Residue Asp63 is the Proton donor/acceptor of the active site. Residue His90 coordinates substrate.

The protein belongs to the methylglyoxal synthase family.

It catalyses the reaction dihydroxyacetone phosphate = methylglyoxal + phosphate. Its function is as follows. Catalyzes the formation of methylglyoxal from dihydroxyacetone phosphate. The polypeptide is Methylglyoxal synthase (Burkholderia ambifaria (strain MC40-6)).